Reading from the N-terminus, the 101-residue chain is Apolipoprotein C-II (101 aa).

Positions 1 to 22 are cleaved as a signal peptide; the sequence is MGTRCLLVLLLVLLVLKCEVQG. Residues 23 to 28 constitute a propeptide, removed in mature form; sequence DDMARQ. Positions 66 to 74 are lipid binding; sequence AMDEKIRDM. Positions 78 to 101 are lipoprotein lipase cofactor; that stretch reads STAAVRIYTGILTDQILSMLTGDP.

This sequence belongs to the apolipoprotein C2 family. In terms of processing, proapolipoprotein C-II is synthesized as a sialic acid containing glycoprotein which is subsequently desialylated prior to its proteolytic processing. Proapolipoprotein C-II, the major form found in plasma undergoes proteolytic cleavage of its N-terminal hexapeptide to generate the mature form apolipoprotein C-II, which occurs as the minor form in plasma.

The protein localises to the secreted. Its function is as follows. Component of chylomicrons, very low-density lipoproteins (VLDL), low-density lipoproteins (LDL), and high-density lipoproteins (HDL) in plasma. Plays an important role in lipoprotein metabolism as an activator of lipoprotein lipase, the enzyme which hydrolyzes the triacylglycerols on chylomicrons and VLDL. The polypeptide is Apolipoprotein C-II (APOC2) (Panthera tigris altaica (Siberian tiger)).